A 547-amino-acid chain; its full sequence is Chaperonin GroEL (547 aa).

ATP-binding positions include 30-33 (TLGP), Lys51, 87-91 (DGTTT), Gly415, 479-481 (NAA), and Asp495.

It belongs to the chaperonin (HSP60) family. In terms of assembly, forms a cylinder of 14 subunits composed of two heptameric rings stacked back-to-back. Interacts with the co-chaperonin GroES.

The protein resides in the cytoplasm. The enzyme catalyses ATP + H2O + a folded polypeptide = ADP + phosphate + an unfolded polypeptide.. Together with its co-chaperonin GroES, plays an essential role in assisting protein folding. The GroEL-GroES system forms a nano-cage that allows encapsulation of the non-native substrate proteins and provides a physical environment optimized to promote and accelerate protein folding. The protein is Chaperonin GroEL of Pseudomonas aeruginosa (strain UCBPP-PA14).